Reading from the N-terminus, the 929-residue chain is Protein translocase subunit SecA (929 aa).

ATP is bound by residues Gln-87, 105–109 (GEGKT), and Asp-512. Zn(2+)-binding residues include Cys-914, Cys-916, Cys-925, and His-926.

It belongs to the SecA family. In terms of assembly, monomer and homodimer. Part of the essential Sec protein translocation apparatus which comprises SecA, SecYEG and auxiliary proteins SecDF-YajC and YidC. Zn(2+) is required as a cofactor.

Its subcellular location is the cell inner membrane. The protein localises to the cytoplasm. The enzyme catalyses ATP + H2O + cellular proteinSide 1 = ADP + phosphate + cellular proteinSide 2.. Part of the Sec protein translocase complex. Interacts with the SecYEG preprotein conducting channel. Has a central role in coupling the hydrolysis of ATP to the transfer of proteins into and across the cell membrane, serving both as a receptor for the preprotein-SecB complex and as an ATP-driven molecular motor driving the stepwise translocation of polypeptide chains across the membrane. The protein is Protein translocase subunit SecA of Psychrobacter arcticus (strain DSM 17307 / VKM B-2377 / 273-4).